We begin with the raw amino-acid sequence, 321 residues long: uncharacterized protein (321 aa).

This is an uncharacterized protein from Archaeoglobus fulgidus (strain ATCC 49558 / DSM 4304 / JCM 9628 / NBRC 100126 / VC-16).